Consider the following 474-residue polypeptide: Putative pectinesterase/pectinesterase inhibitor 38 (474 aa).

Positions 1-130 are pectinesterase inhibitor 38; that stretch reads MVFGNEMCDE…HSLESITIDV (130 aa). A glycan (N-linked (GlcNAc...) asparagine) is linked at Asn80. The interval 164 to 461 is pectinesterase 38; the sequence is DVVVAQDGSG…TLPKFIDSAS (298 aa). Substrate-binding residues include Thr241 and Gln271. The Proton donor; for pectinesterase activity role is filled by Asp294. Residues Cys308 and Cys328 are joined by a disulfide bond. The Nucleophile; for pectinesterase activity role is filled by Asp315. An N-linked (GlcNAc...) asparagine glycan is attached at Asn351. Substrate is bound by residues Arg380 and Trp382. N-linked (GlcNAc...) asparagine glycosylation is present at Asn409.

This sequence in the N-terminal section; belongs to the PMEI family. The protein in the C-terminal section; belongs to the pectinesterase family.

The protein resides in the secreted. The protein localises to the cell wall. It catalyses the reaction [(1-&gt;4)-alpha-D-galacturonosyl methyl ester](n) + n H2O = [(1-&gt;4)-alpha-D-galacturonosyl](n) + n methanol + n H(+). Its pathway is glycan metabolism; pectin degradation; 2-dehydro-3-deoxy-D-gluconate from pectin: step 1/5. Acts in the modification of cell walls via demethylesterification of cell wall pectin. In Arabidopsis thaliana (Mouse-ear cress), this protein is Putative pectinesterase/pectinesterase inhibitor 38 (PME38).